The sequence spans 95 residues: Small ribosomal subunit protein uS15 (95 aa).

The protein belongs to the universal ribosomal protein uS15 family. In terms of assembly, part of the 30S ribosomal subunit. Forms a bridge to the 50S subunit in the 70S ribosome, contacting the 23S rRNA.

In terms of biological role, one of the primary rRNA binding proteins, it binds directly to 16S rRNA where it helps nucleate assembly of the platform of the 30S subunit by binding and bridging several RNA helices of the 16S rRNA. Functionally, forms an intersubunit bridge (bridge B4) with the 23S rRNA of the 50S subunit in the ribosome. The chain is Small ribosomal subunit protein uS15 from Sulfurihydrogenibium sp. (strain YO3AOP1).